Here is an 88-residue protein sequence, read N- to C-terminus: Small ribosomal subunit protein bS20 (88 aa).

The tract at residues 1–27 (MANSKSAKKRALQSEKRRQHNASRRSM) is disordered.

The protein belongs to the bacterial ribosomal protein bS20 family.

Binds directly to 16S ribosomal RNA. This chain is Small ribosomal subunit protein bS20, found in Shewanella sediminis (strain HAW-EB3).